Here is a 501-residue protein sequence, read N- to C-terminus: Pre-mRNA-splicing factor 38B (501 aa).

Over residues 1–11 (MAGSQQQQQQQ) the composition is skewed to low complexity. Disordered regions lie at residues 1–28 (MAGS…LPLW) and 208–501 (DQHM…ADSP). Residues 243–273 (GDKRRSRTPRRSPSPRKSQNRSRSRSHHRER) show a composition bias toward basic residues. A coiled-coil region spans residues 281-302 (ELERERDRQRKEREGKDRDRDR). Positions 281–328 (ELERERDRQRKEREGKDRDRDRDRDRERDRERDRDRRRSRTPDRNAER) are enriched in basic and acidic residues. Over residues 329–341 (RRSRSRERRRSRS) the composition is skewed to basic residues. Residues 342–408 (TSRDKRTERK…EEKKHREEKR (67 aa)) are compositionally biased toward basic and acidic residues. The segment covering 409–435 (SKRSRSRSRDRKHKAERSSKKRSRSGS) has biased composition (basic residues). A compositionally biased stretch (basic and acidic residues) spans 437-447 (SRQEAGEEKNR). Residues 448–468 (KRERSHSKDRQHKRSRSKERS) are compositionally biased toward basic residues. The segment covering 469-491 (HRRESSNERIHARQERPSSESGE) has biased composition (basic and acidic residues). Over residues 492–501 (RTNSVRADSP) the composition is skewed to polar residues.

This sequence belongs to the PRP38 family.

The protein localises to the nucleus. Functionally, may be required for pre-mRNA splicing. This chain is Pre-mRNA-splicing factor 38B (prpf38b), found in Danio rerio (Zebrafish).